Here is a 299-residue protein sequence, read N- to C-terminus: Oxygen-dependent coproporphyrinogen-III oxidase (299 aa).

A substrate-binding site is contributed by serine 92. Mn(2+)-binding residues include histidine 96 and histidine 106. Histidine 106 serves as the catalytic Proton donor. 108–110 (NVR) is a substrate binding site. The Mn(2+) site is built by histidine 145 and histidine 175. The important for dimerization stretch occupies residues 240–275 (YVEFNLVWDRGTLFGLQTGGRTESILMSMPPLVRWE). 258-260 (GGR) contributes to the substrate binding site.

The protein belongs to the aerobic coproporphyrinogen-III oxidase family. As to quaternary structure, homodimer. The cofactor is Mn(2+).

It is found in the cytoplasm. It catalyses the reaction coproporphyrinogen III + O2 + 2 H(+) = protoporphyrinogen IX + 2 CO2 + 2 H2O. The protein operates within porphyrin-containing compound metabolism; protoporphyrin-IX biosynthesis; protoporphyrinogen-IX from coproporphyrinogen-III (O2 route): step 1/1. Functionally, involved in the heme biosynthesis. Catalyzes the aerobic oxidative decarboxylation of propionate groups of rings A and B of coproporphyrinogen-III to yield the vinyl groups in protoporphyrinogen-IX. The chain is Oxygen-dependent coproporphyrinogen-III oxidase from Escherichia coli O17:K52:H18 (strain UMN026 / ExPEC).